The chain runs to 347 residues: Uroporphyrinogen decarboxylase (347 aa).

Residues 36-40 (RQAGR), Asp-86, Tyr-160, Ser-212, and His-326 contribute to the substrate site.

This sequence belongs to the uroporphyrinogen decarboxylase family. As to quaternary structure, homodimer.

It localises to the cytoplasm. It catalyses the reaction uroporphyrinogen III + 4 H(+) = coproporphyrinogen III + 4 CO2. Its pathway is porphyrin-containing compound metabolism; protoporphyrin-IX biosynthesis; coproporphyrinogen-III from 5-aminolevulinate: step 4/4. Catalyzes the decarboxylation of four acetate groups of uroporphyrinogen-III to yield coproporphyrinogen-III. The chain is Uroporphyrinogen decarboxylase from Wolbachia sp. subsp. Brugia malayi (strain TRS).